We begin with the raw amino-acid sequence, 209 residues long: Thymidylate kinase (209 aa).

Residue 7–14 coordinates ATP; it reads GIDGAGKS.

Belongs to the thymidylate kinase family.

It catalyses the reaction dTMP + ATP = dTDP + ADP. Phosphorylation of dTMP to form dTDP in both de novo and salvage pathways of dTTP synthesis. The sequence is that of Thymidylate kinase from Mycoplasma mobile (strain ATCC 43663 / 163K / NCTC 11711) (Mesomycoplasma mobile).